The chain runs to 253 residues: Ubiquinone biosynthesis O-methyltransferase (253 aa).

Residues R47, G78, D99, and M141 each coordinate S-adenosyl-L-methionine.

This sequence belongs to the methyltransferase superfamily. UbiG/COQ3 family.

The enzyme catalyses a 3-demethylubiquinol + S-adenosyl-L-methionine = a ubiquinol + S-adenosyl-L-homocysteine + H(+). The catalysed reaction is a 3-(all-trans-polyprenyl)benzene-1,2-diol + S-adenosyl-L-methionine = a 2-methoxy-6-(all-trans-polyprenyl)phenol + S-adenosyl-L-homocysteine + H(+). Its pathway is cofactor biosynthesis; ubiquinone biosynthesis. O-methyltransferase that catalyzes the 2 O-methylation steps in the ubiquinone biosynthetic pathway. The chain is Ubiquinone biosynthesis O-methyltransferase from Rhodopseudomonas palustris (strain BisA53).